The following is a 121-amino-acid chain: Large ribosomal subunit protein bL19 (121 aa).

Belongs to the bacterial ribosomal protein bL19 family.

In terms of biological role, this protein is located at the 30S-50S ribosomal subunit interface and may play a role in the structure and function of the aminoacyl-tRNA binding site. This chain is Large ribosomal subunit protein bL19, found in Gloeobacter violaceus (strain ATCC 29082 / PCC 7421).